Here is a 369-residue protein sequence, read N- to C-terminus: Somatostatin receptor type 2 (369 aa).

Topologically, residues 1 to 43 (MEMSSEQLNGSQVWVSSPFDLNGSLGPSNGSNQTEPYYDMTSN) are extracellular. N-linked (GlcNAc...) asparagine glycans are attached at residues asparagine 9, asparagine 22, asparagine 29, and asparagine 32. The chain crosses the membrane as a helical span at residues 44–67 (AVLTFIYFVVCVVGLCGNTLVIYV). Residues 68 to 78 (ILRYAKMKTIT) are Cytoplasmic-facing. Residues 79 to 103 (NIYILNLAIADELFMLGLPFLAMQV) form a helical membrane-spanning segment. Over 104–118 (ALVHWPFGKAICRVV) the chain is Extracellular. A disulfide bond links cysteine 115 and cysteine 193. Residues 119 to 138 (MTVDGINQFTSIFCLTVMSI) form a helical membrane-spanning segment. Residues 139 to 161 (DRYLAVVHPIKSAKWRRPRTAKM) lie on the Cytoplasmic side of the membrane. A helical transmembrane segment spans residues 162–181 (INVAVWCVSLLVILPIMIYA). Topologically, residues 182 to 207 (GLRSNQWGRSSCTINWPGESGAWYTG) are extracellular. The chain crosses the membrane as a helical span at residues 208-229 (FIIYAFILGFLVPLTIICLCYL). Residues 230–253 (FIIIKVKSSGIRVGSSKRKKSEKK) are Cytoplasmic-facing. The chain crosses the membrane as a helical span at residues 254–278 (VTRMVSIVVAVFIFCWLPFYIFNVS). At 279 to 288 (SVSVAISPTP) the chain is on the extracellular side. The helical transmembrane segment at 289-303 (ALKGMFDFVVILTYA) threads the bilayer. Topologically, residues 304–369 (NSCANPILYA…LLNGDLQTSI (66 aa)) are cytoplasmic. The S-palmitoyl cysteine moiety is linked to residue cysteine 328. Phosphoserine is present on residues serine 341, serine 343, and serine 348. Residues threonine 353 and threonine 354 each carry the phosphothreonine modification.

The protein belongs to the G-protein coupled receptor 1 family. Homodimer and heterodimer with SSTR3 and SSTR5. Heterodimerization with SSTR3 inactivates SSTR3 receptor function. Heterodimerization with SSTR5 is enhanced by agonist stimulation of SSTR2 and increases SSTR2 cell growth inhibition activity. Following agonist stimulation, homodimers dissociate into monomers which is required for receptor internalization. Interacts with beta-arrestin; this interaction is necessary for receptor internalization and is destabilized by heterodimerization with SSTR5 which results in increased recycling of SSTR2 to the cell surface. Interacts (via C-terminus) with SHANK1 (via PDZ domain). Post-translationally, phosphorylated on serine and threonine residues in response to agonist stimulation, leading to receptor desensitization and rapid internalization. Phosphorylated to a greater extent on serine than threonine residues. Threonine phosphorylation is required for arrestin binding and receptor endocytosis but is not necessary for desensitization. In terms of tissue distribution, cerebrum and kidney.

The protein resides in the cell membrane. It localises to the cytoplasm. Functionally, receptor for somatostatin-14 and -28. This receptor is coupled via pertussis toxin sensitive G proteins to inhibition of adenylyl cyclase. In addition it stimulates phosphotyrosine phosphatase and PLC via pertussis toxin insensitive as well as sensitive G proteins. Inhibits calcium entry by suppressing voltage-dependent calcium channels. Acts as the functionally dominant somatostatin receptor in pancreatic alpha- and beta-cells where it mediates the inhibitory effect of somatostatin-14 on hormone secretion. Inhibits cell growth through enhancement of MAPK1 and MAPK2 phosphorylation and subsequent up-regulation of CDKN1B. Stimulates neuronal migration and axon outgrowth and may participate in neuron development and maturation during brain development. Mediates negative regulation of insulin receptor signaling through PTPN6. Inactivates SSTR3 receptor function following heterodimerization. The chain is Somatostatin receptor type 2 (Sstr2) from Mus musculus (Mouse).